Here is a 33-residue protein sequence, read N- to C-terminus: Thrombin-like enzyme RP34 (33 aa).

Residues 1-33 (VIGGDEXDINEHRSLALMYXSWSHRFIXXGXLI) form the Peptidase S1 domain.

The protein belongs to the peptidase S1 family. Snake venom subfamily. Homodimer. In terms of tissue distribution, expressed by the venom gland.

The protein localises to the secreted. The catalysed reaction is Selective cleavage of Arg-|-Xaa bond in fibrinogen, to form fibrin, and release fibrinopeptide A. The specificity of further degradation of fibrinogen varies with species origin of the enzyme.. In terms of biological role, thrombin-like snake venom serine protease that displays clotting activity on fibrinogen. Shows both arginine-ester hydrolase and amidase activities on synthetic substrates. Also shows proteolytic activity toward casein. This Cerastes cerastes (Horned desert viper) protein is Thrombin-like enzyme RP34.